The following is a 315-amino-acid chain: Spermidine synthase 1 (315 aa).

In terms of domain architecture, PABS spans 25-262 (PGWFSEISPL…GMIGFMLCST (238 aa)). Gln-56 lines the S-adenosyl 3-(methylsulfanyl)propylamine pocket. Position 86 (Tyr-86) interacts with putrescine. Residues Gln-87, Asp-111, Glu-131, 162 to 163 (DG), and Asp-181 contribute to the S-adenosyl 3-(methylsulfanyl)propylamine site. The active-site Proton acceptor is Asp-181. Residues 181 to 184 (DSSD) and Tyr-250 each bind putrescine.

It belongs to the spermidine/spermine synthase family.

It carries out the reaction S-adenosyl 3-(methylsulfanyl)propylamine + putrescine = S-methyl-5'-thioadenosine + spermidine + H(+). It functions in the pathway amine and polyamine biosynthesis; spermidine biosynthesis; spermidine from putrescine: step 1/1. The sequence is that of Spermidine synthase 1 from Hyoscyamus niger (Black henbane).